A 105-amino-acid chain; its full sequence is Large ribosomal subunit protein uL24 (105 aa).

The protein belongs to the universal ribosomal protein uL24 family. Part of the 50S ribosomal subunit.

Functionally, one of two assembly initiator proteins, it binds directly to the 5'-end of the 23S rRNA, where it nucleates assembly of the 50S subunit. Its function is as follows. One of the proteins that surrounds the polypeptide exit tunnel on the outside of the subunit. In Aromatoleum aromaticum (strain DSM 19018 / LMG 30748 / EbN1) (Azoarcus sp. (strain EbN1)), this protein is Large ribosomal subunit protein uL24.